The sequence spans 315 residues: Glycine--tRNA ligase alpha subunit (315 aa).

It belongs to the class-II aminoacyl-tRNA synthetase family. In terms of assembly, tetramer of two alpha and two beta subunits.

The protein localises to the cytoplasm. The catalysed reaction is tRNA(Gly) + glycine + ATP = glycyl-tRNA(Gly) + AMP + diphosphate. This Sorangium cellulosum (strain So ce56) (Polyangium cellulosum (strain So ce56)) protein is Glycine--tRNA ligase alpha subunit.